Reading from the N-terminus, the 111-residue chain is Phosphoribosyl-AMP cyclohydrolase (111 aa).

Asp80 contacts Mg(2+). Cys81 provides a ligand contact to Zn(2+). The Mg(2+) site is built by Asp82 and Asp84. 2 residues coordinate Zn(2+): Cys97 and Cys104.

Belongs to the PRA-CH family. Homodimer. It depends on Mg(2+) as a cofactor. Zn(2+) serves as cofactor.

Its subcellular location is the cytoplasm. The enzyme catalyses 1-(5-phospho-beta-D-ribosyl)-5'-AMP + H2O = 1-(5-phospho-beta-D-ribosyl)-5-[(5-phospho-beta-D-ribosylamino)methylideneamino]imidazole-4-carboxamide. The protein operates within amino-acid biosynthesis; L-histidine biosynthesis; L-histidine from 5-phospho-alpha-D-ribose 1-diphosphate: step 3/9. Functionally, catalyzes the hydrolysis of the adenine ring of phosphoribosyl-AMP. This Mycobacterium marinum (strain ATCC BAA-535 / M) protein is Phosphoribosyl-AMP cyclohydrolase.